The primary structure comprises 267 residues: Undecaprenyl-diphosphatase (267 aa).

Helical transmembrane passes span 5–25 (TIVAAALGLLEGLTEFIPVSS), 45–65 (FEVLIQLGAIMAILGVYAGRL), 82–102 (ILAVLLAFLPAVVIGVLAHRI), 108–128 (FETPTLIAVMLIVGGVVLLFV), 143–163 (FPLPMALKIGFIQCLAMIPGV), 183–203 (AAEFSFFLSMPTMLGAFVYDL), 213–233 (AATGNIVIGFVCAFLAAVVVV), and 243–263 (YGYGLFAWWRIAVGVAVLLAL).

This sequence belongs to the UppP family.

The protein localises to the cell inner membrane. The catalysed reaction is di-trans,octa-cis-undecaprenyl diphosphate + H2O = di-trans,octa-cis-undecaprenyl phosphate + phosphate + H(+). Its function is as follows. Catalyzes the dephosphorylation of undecaprenyl diphosphate (UPP). Confers resistance to bacitracin. In Paracoccus denitrificans (strain Pd 1222), this protein is Undecaprenyl-diphosphatase.